Reading from the N-terminus, the 62-residue chain is Endoregulin (62 aa).

Residues 25 to 45 (LAVIILFITAVLLLILFAIVF) traverse the membrane as a helical segment.

In terms of assembly, homooligomer. Can also form heterooligomers with other sarcoplasmic/endoplasmic reticulum calcium ATPase (SERCA) regulators ARLN, PLN, SLN and STRIT1/DWORF. Monomer. Interacts as a monomer with ATP2A2/SERCA2; the interaction results in inhibition of ATP2A2 Ca(2+) affinity.

The protein resides in the endoplasmic reticulum membrane. Inhibits the activity of the calcium ATPases ATP2A2/SERCA2 and ATP2A3/SERCA3 by decreasing their apparent affinity for Ca(2+). The polypeptide is Endoregulin (Homo sapiens (Human)).